The following is a 597-amino-acid chain: Lipoprotein LpqB (597 aa).

The N-terminal stretch at 1 to 28 is a signal peptide; that stretch reads MTPGRRSALLSRSVCGAIVLAVLVTVSG. C29 carries N-palmitoyl cysteine lipidation. C29 is lipidated: S-diacylglycerol cysteine. Residues 38–51 are compositionally biased toward polar residues; sequence PQAIGTINRDSPGS. The tract at residues 38–58 is disordered; that stretch reads PQAIGTINRDSPGSSVAAPAP.

This sequence belongs to the LpqB lipoprotein family.

The protein resides in the cell membrane. This is Lipoprotein LpqB from Rhodococcus jostii (strain RHA1).